A 998-amino-acid polypeptide reads, in one-letter code: DNA damage-induced apoptosis suppressor protein (998 aa).

A disordered region spans residues 815–834 (DKQQASPSCPKNIKTPSQKI). The segment covering 817 to 834 (QQASPSCPKNIKTPSQKI) has biased composition (polar residues).

Highly expressed in colorectal and lung cancer tissues.

It is found in the cytoplasm. The protein resides in the nucleus. Its function is as follows. May be an anti-apoptotic protein involved in DNA repair or cell survival. The sequence is that of DNA damage-induced apoptosis suppressor protein (DDIAS) from Homo sapiens (Human).